Reading from the N-terminus, the 263-residue chain is Serine protease ami (263 aa).

An N-terminal signal peptide occupies residues 1–21 (MNISRVLFAVVLVLTVSTYEC). Asparagine 2 carries an N-linked (GlcNAc...) asparagine glycan. Residues 22–26 (RPRGR) constitute a propeptide, activation peptide. Residues 27-254 (ILGGQDSKEK…YKSWIMETMY (228 aa)) enclose the Peptidase S1 domain. Cysteine 52 and cysteine 68 are disulfide-bonded. Histidine 67 serves as the catalytic Charge relay system. 3 N-linked (GlcNAc...) asparagine glycosylation sites follow: asparagine 73, asparagine 74, and asparagine 108. Aspartate 115 acts as the Charge relay system in catalysis. Cystine bridges form between cysteine 149–cysteine 215, cysteine 180–cysteine 196, and cysteine 205–cysteine 230. The active-site Charge relay system is the serine 209. The N-linked (GlcNAc...) asparagine glycan is linked to asparagine 255.

The protein belongs to the peptidase S1 family. In terms of tissue distribution, in the embryo, localizes to paraxial regions at the neurula stage and anterior ventral regions at the tailbud stage. From the late tailbud to tadpole stage, expressed along the forming blood vessels including the anterior cardinal veins, posterior cardinal veins, intersomitic veins, dorsal longitudinal anastomosing vessel, dorsal aorta, pronephric sinus and most prominently around the vascular vitelline network, where expression shows left-right asymmetry in the stage 42 embryo. Localizes to endothelial cells. In adults, shows highest expression in liver with moderate levels of expression in the fat body, lung, gut and vessels. Weakly expressed in adult heart, muscle, testis and ovary.

It is found in the secreted. Functionally, probable serine protease. In Xenopus laevis (African clawed frog), this protein is Serine protease ami.